The sequence spans 1243 residues: Membrane-associated phosphatidylinositol transfer protein 1 (1243 aa).

3 positions are modified to phosphothreonine: T59, T282, and T287. Residues 259-330 (CNTGSEGPEA…HGGGVSPQSL (72 aa)) are disordered. The segment covering 271–283 (PGKSSTEARPGTS) has biased composition (polar residues). A compositionally biased stretch (low complexity) spans 299 to 319 (ASPDASFGKQWSSSSRSSYSS). Phosphoserine is present on residues S300, S304, S319, S326, S329, S342, S345, S346, and S373. Position 382 is a phosphoserine; by CDK1 (S382). The span at 581–593 (AGPGSRGSSRRGS) shows a compositional bias: low complexity. Residues 581–679 (AGPGSRGSSR…PASSEAPDGP (99 aa)) form a disordered region. 3 positions are modified to phosphoserine: S593, S600, and S621. Polar residues predominate over residues 643–658 (GSQNSLQVASTATSSG). Residues 684-878 (RLDFKVSGFF…VVAFILRQVI (195 aa)) form the DDHD domain. S895 bears the Phosphoserine mark. The disordered stretch occupies residues 1206 to 1243 (LLRSRGPSQVDREGPGTPPTTLARGKTRSISLKLDSEE). An omega-N-methylarginine mark is found at R1210 and R1217. S1236 bears the Phosphoserine mark.

The protein belongs to the PtdIns transfer protein family. PI transfer class IIA subfamily. As to quaternary structure, interacts with PTK2B via its C-terminus. Interacts with RHOA. Has higher affinity for the inactive, GDP-bound form of RHOA. The CDK1-phosphorylated form interacts with PLK1. Interacts with VAPB and PIK4CA. Post-translationally, phosphorylated on multiple sites by CDK1 at the onset of mitosis. Phosphorylation facilitates dissociation from the Golgi complex and is required for interaction with PLK1. Phosphorylated on threonine residues upon treatment with oleic acid. In terms of processing, phosphorylated on tyrosine residues by PTK2B. Detected at high levels in brain, and at lower levels in lung, kidney, spleen and liver (at protein level). Ubiquitous. Highly expressed in embryonic retina and the central nervous system.

It localises to the cytoplasm. It is found in the golgi apparatus. The protein localises to the golgi stack membrane. Its subcellular location is the endoplasmic reticulum membrane. The protein resides in the lipid droplet. It localises to the cleavage furrow. It is found in the midbody. The catalysed reaction is a 1,2-diacyl-sn-glycero-3-phospho-(1D-myo-inositol)(in) = a 1,2-diacyl-sn-glycero-3-phospho-(1D-myo-inositol)(out). Catalyzes the transfer of phosphatidylinositol (PI) between membranes. Binds PI. Also binds phosphatidylcholine (PC) and phosphatidic acid (PA) with the binding affinity order of PI &gt; PA &gt; PC. Regulates RHOA activity, and plays a role in cytoskeleton remodeling. Necessary for normal completion of cytokinesis. Plays a role in maintaining normal diacylglycerol levels in the Golgi apparatus. Necessary for maintaining the normal structure of the endoplasmic reticulum and the Golgi apparatus. Required for protein export from the endoplasmic reticulum and the Golgi. Binds calcium ions. The sequence is that of Membrane-associated phosphatidylinositol transfer protein 1 (Pitpnm1) from Mus musculus (Mouse).